The sequence spans 336 residues: 3-isopropylmalate dehydrogenase (336 aa).

Substrate contacts are provided by arginine 87, arginine 97, arginine 121, and aspartate 211. Positions 211, 235, and 239 each coordinate Mg(2+). Position 271–283 (271–283 (GSAPDIAGQGIAD)) interacts with NAD(+).

It belongs to the isocitrate and isopropylmalate dehydrogenases family. LeuB type 2 subfamily. Homodimer. The cofactor is Mg(2+). Mn(2+) is required as a cofactor.

It localises to the cytoplasm. The enzyme catalyses (2R,3S)-3-isopropylmalate + NAD(+) = 4-methyl-2-oxopentanoate + CO2 + NADH. It participates in amino-acid biosynthesis; L-leucine biosynthesis; L-leucine from 3-methyl-2-oxobutanoate: step 3/4. Its function is as follows. Catalyzes the oxidation of 3-carboxy-2-hydroxy-4-methylpentanoate (3-isopropylmalate) to 3-carboxy-4-methyl-2-oxopentanoate. The product decarboxylates to 4-methyl-2 oxopentanoate. This Rhodococcus opacus (strain B4) protein is 3-isopropylmalate dehydrogenase.